The primary structure comprises 277 residues: Digeranylgeranylglyceryl phosphate synthase (277 aa).

8 helical membrane-spanning segments follow: residues 16–36 (LLAG…LPEL), 40–60 (ILVF…NDYF), 83–105 (AALW…INIW), 107–124 (FLLA…AWKL), 146–166 (GAIA…AFLV), 202–222 (VGAL…KAGI), 224–244 (LGYL…FLIL), and 256–276 (QILL…ASLV).

Belongs to the UbiA prenyltransferase family. DGGGP synthase subfamily. It depends on Mg(2+) as a cofactor.

It is found in the cell membrane. It catalyses the reaction sn-3-O-(geranylgeranyl)glycerol 1-phosphate + (2E,6E,10E)-geranylgeranyl diphosphate = 2,3-bis-O-(geranylgeranyl)-sn-glycerol 1-phosphate + diphosphate. The protein operates within membrane lipid metabolism; glycerophospholipid metabolism. Prenyltransferase that catalyzes the transfer of the geranylgeranyl moiety of geranylgeranyl diphosphate (GGPP) to the C2 hydroxyl of (S)-3-O-geranylgeranylglyceryl phosphate (GGGP). This reaction is the second ether-bond-formation step in the biosynthesis of archaeal membrane lipids. The sequence is that of Digeranylgeranylglyceryl phosphate synthase from Thermococcus kodakarensis (strain ATCC BAA-918 / JCM 12380 / KOD1) (Pyrococcus kodakaraensis (strain KOD1)).